The primary structure comprises 85 residues: U4-theraphotoxin-Hhn1p (85 aa).

The N-terminal stretch at 1–22 (MKMTLIAIPTCAAVLVLHTTAA) is a signal peptide. Positions 23-48 (EELEAESQLMEVGMPDTELEAVDGER) are excised as a propeptide. Intrachain disulfides connect C52-C66, C56-C77, and C71-C82.

This sequence belongs to the neurotoxin 12 (Hwtx-2) family. 02 (Hwtx-2) subfamily. As to expression, expressed by the venom gland.

It localises to the secreted. Postsynaptic neurotoxin. The chain is U4-theraphotoxin-Hhn1p from Cyriopagopus hainanus (Chinese bird spider).